Consider the following 87-residue polypeptide: Small ribosomal subunit protein bS18 (87 aa).

Residues 1-20 (MAGKSSGDRRKPIRKGKDGK) show a composition bias toward basic and acidic residues. Residues 1-24 (MAGKSSGDRRKPIRKGKDGKNAAP) form a disordered region.

Belongs to the bacterial ribosomal protein bS18 family. As to quaternary structure, part of the 30S ribosomal subunit. Forms a tight heterodimer with protein bS6.

Binds as a heterodimer with protein bS6 to the central domain of the 16S rRNA, where it helps stabilize the platform of the 30S subunit. The chain is Small ribosomal subunit protein bS18 from Leifsonia xyli subsp. xyli (strain CTCB07).